An 832-amino-acid chain; its full sequence is AP-1 complex subunit gamma-1 (832 aa).

The GAE domain maps to 733–832 (LNVYASLLSA…QFDHKFDETL (100 aa)).

As to quaternary structure, adapter protein complex 1 (AP-1) is a heterotetramer composed of two large adaptins (gamma-type subunit APL4 and beta-type subunit APL2), a medium adaptin (mu-type subunit APM1) and a small adaptin (sigma-type subunit APS1). AP-1 interacts with clathrin. Also a component of the AP-1R complex composed of at least APM2, APL4 and APS1.

The protein localises to the cytoplasm. The protein resides in the golgi apparatus membrane. Its subcellular location is the cytoplasmic vesicle. It localises to the clathrin-coated vesicle membrane. Functionally, adaptins are components of the adapter complexes which link clathrin to receptors in coated vesicles. Clathrin-associated protein complexes are believed to interact with the cytoplasmic tails of membrane proteins, leading to their selection and concentration. The AP-1 complex interacts directly with clathrin. Component of the AP-1-related (AP-1R) complex, an adapter protein complex that mediates sorting of cargo SNARE SNC1. In contrast to the APM1-containing AP-1 complex, AP-1R is incapable of sorting CHS3. This is AP-1 complex subunit gamma-1 (APL4) from Saccharomyces cerevisiae (strain ATCC 204508 / S288c) (Baker's yeast).